The sequence spans 427 residues: MLDTVAPSPDIDALMNDIGRKAKAAARPLGFASTEAKNKALNAMADAIMANKAHILAENAKDLKDIEGSETLASFVDRLTLNDKRIAEMAEGIRAIAALADPVGEVIAAWDRPNGLKIERVRTPLGVIGVIFESRPNVTADAGALCLKAGNAVILRCGSDSRRSSQAIHVCMVEGLKAAGLPEHAIQLVPVTDRAAVGAMLRGLEGAIDVIVPRGGKSLVARVQNEARVPVFAHLEGLCHIYVDASADLEMAKKIVVNAKMRRTGICGAAETLLVDGAAIDTHLTPLLEVLTDAGCEIRASAAVLKVAPGLKTATEEDWSTEYLDAIISVATVDGISGAIAHIQTYSSNHTEAVIAEDPAVVQRFFTEVDSAILLHNASTQFADGGEFGMGAEIGIATGKMHARGPVGVEQLTSFKYRVRGAGQTRP.

The protein belongs to the gamma-glutamyl phosphate reductase family.

It is found in the cytoplasm. It catalyses the reaction L-glutamate 5-semialdehyde + phosphate + NADP(+) = L-glutamyl 5-phosphate + NADPH + H(+). It functions in the pathway amino-acid biosynthesis; L-proline biosynthesis; L-glutamate 5-semialdehyde from L-glutamate: step 2/2. Its function is as follows. Catalyzes the NADPH-dependent reduction of L-glutamate 5-phosphate into L-glutamate 5-semialdehyde and phosphate. The product spontaneously undergoes cyclization to form 1-pyrroline-5-carboxylate. The polypeptide is Gamma-glutamyl phosphate reductase (Rhizobium etli (strain ATCC 51251 / DSM 11541 / JCM 21823 / NBRC 15573 / CFN 42)).